The following is a 103-amino-acid chain: Large ribosomal subunit protein uL22c (103 aa).

This sequence belongs to the universal ribosomal protein uL22 family. As to quaternary structure, part of the 50S ribosomal subunit.

It localises to the plastid. Its subcellular location is the chloroplast. This protein binds specifically to 23S rRNA. Its function is as follows. The globular domain of the protein is located near the polypeptide exit tunnel on the outside of the subunit, while an extended beta-hairpin is found that lines the wall of the exit tunnel in the center of the 70S ribosome. The polypeptide is Large ribosomal subunit protein uL22c (rpl22) (Cyanidium caldarium (Red alga)).